The chain runs to 27 residues: C-reactive protein P1 (27 aa).

The interval 1–27 (IPQDLSGKMLTFPKEEDDDDVKLMTPK) is disordered. Positions 6–27 (SGKMLTFPKEEDDDDVKLMTPK) constitute a Pentraxin (PTX) domain.

Belongs to the pentraxin family. Homopentamer. Pentraxin (or pentaxin) have a discoid arrangement of 5 non-covalently bound subunits. Exists as a dimer under reducing conditions. Ca(2+) serves as cofactor. Post-translationally, glycosylated.

It is found in the secreted. In terms of biological role, displays several functions associated with host defense: it promotes agglutination, bacterial capsular swelling, phagocytosis, and complement fixation through its calcium-dependent binding to phosphorylcholine. This is C-reactive protein P1 from Gadus morhua (Atlantic cod).